We begin with the raw amino-acid sequence, 416 residues long: MNQKLGLKDQDQEIFDLIEQEKIRQKENILLIASENFVSQAVLDAQGSILTNKYAEGYPQARYYNGCKNVDQIEKIAIQRATKLFGAKYANVQPHSGSQANMGAFQALLKPGDKILGLSLMDGGHLTHGHKLSFSGGFYEAHFYNVHPQTEMLDYDEIRKVALKVKPKLIIAGYSAYSKTINFKKFRQIADEVNAYLMADIAHIAGLVACGLHPCPFEANADVVTSTMHKTLRGPRGGLILTNKEEVFKKINRGIFPGIQGGPCIHTIAAKAVAFQEAMMPSFKEYQKQVIKNANTFAKAFQQKGYRIVSGGTDNHLFLIDVKHKNPEFTGSKIANMLEKINIVVNKNTIPFDQEKPFVTSGIRIGTPAMTTVGFRENDFILVADLMDKAINHLDDESYLAQIKQQVLALLSKFNK.

Residues leucine 120 and 124-126 (GHL) each bind (6S)-5,6,7,8-tetrahydrofolate. N6-(pyridoxal phosphate)lysine is present on lysine 230. Glutamate 246 provides a ligand contact to (6S)-5,6,7,8-tetrahydrofolate.

It belongs to the SHMT family. As to quaternary structure, homodimer. Requires pyridoxal 5'-phosphate as cofactor.

The protein localises to the cytoplasm. The catalysed reaction is (6R)-5,10-methylene-5,6,7,8-tetrahydrofolate + glycine + H2O = (6S)-5,6,7,8-tetrahydrofolate + L-serine. It functions in the pathway one-carbon metabolism; tetrahydrofolate interconversion. Its pathway is amino-acid biosynthesis; glycine biosynthesis; glycine from L-serine: step 1/1. Functionally, catalyzes the reversible interconversion of serine and glycine with tetrahydrofolate (THF) serving as the one-carbon carrier. This reaction serves as the major source of one-carbon groups required for the biosynthesis of purines, thymidylate, methionine, and other important biomolecules. Also exhibits THF-independent aldolase activity toward beta-hydroxyamino acids, producing glycine and aldehydes, via a retro-aldol mechanism. The chain is Serine hydroxymethyltransferase from Onion yellows phytoplasma (strain OY-M).